A 374-amino-acid polypeptide reads, in one-letter code: Centrosomal protein of 41 kDa (374 aa).

The Rhodanese domain occupies Pro176–Thr273. 2 disordered regions span residues Ile279–Gln301 and Glu329–Lys374. Residues Glu329–Thr349 show a composition bias toward low complexity.

Belongs to the CEP41 family. Expressed in various ciliary organs, including Kupffer's vesicle, ear and heart, as well as brain and kidney.

The protein resides in the cytoplasm. It is found in the cytoskeleton. It localises to the microtubule organizing center. The protein localises to the centrosome. Its subcellular location is the cell projection. The protein resides in the cilium. It is found in the cilium basal body. Its function is as follows. Required during ciliogenesis for tubulin glutamylation in cilium. Probably acts by participating in the transport of tubulin polyglutamylases between the basal body and the cilium. The protein is Centrosomal protein of 41 kDa (cep41) of Danio rerio (Zebrafish).